Reading from the N-terminus, the 297-residue chain is ATP synthase F(1) complex subunit gamma, mitochondrial (297 aa).

The transit peptide at 1 to 25 directs the protein to the mitochondrion; the sequence is MFSRAGVAGLSAWTLQPQWIQVRNM. Lys39 is modified (N6-acetyllysine). Lys49 bears the N6-succinyllysine mark. Position 55 is an N6-acetyllysine (Lys55). Lys115 is modified (N6-acetyllysine; alternate). Lys115 is modified (N6-succinyllysine; alternate). Ser146 is subject to Phosphoserine. The residue at position 154 (Lys154) is an N6-acetyllysine; alternate. Residue Lys154 is modified to N6-succinyllysine; alternate. The residue at position 197 (Lys197) is an N6-acetyllysine. Position 270 is an N6-succinyllysine (Lys270).

Belongs to the ATPase gamma chain family. Component of the ATP synthase complex composed at least of ATP5F1A/subunit alpha, ATP5F1B/subunit beta, ATP5MC1/subunit c (homooctomer), MT-ATP6/subunit a, MT-ATP8/subunit 8, ATP5ME/subunit e, ATP5MF/subunit f, ATP5MG/subunit g, ATP5MK/subunit k, ATP5MJ/subunit j, ATP5F1C/subunit gamma, ATP5F1D/subunit delta, ATP5F1E/subunit epsilon, ATP5PF/subunit F6, ATP5PB/subunit b, ATP5PD/subunit d, ATP5PO/subunit OSCP. ATP synthase complex consists of a soluble F(1) head domain (subunits alpha(3) and beta(3)) - the catalytic core - and a membrane F(0) domain - the membrane proton channel (subunits c, a, 8, e, f, g, k and j). These two domains are linked by a central stalk (subunits gamma, delta, and epsilon) rotating inside the F1 region and a stationary peripheral stalk (subunits F6, b, d, and OSCP). Interacts with FLVCR2; this interaction occurs in the absence of heme and is disrupted upon heme binding.

It is found in the mitochondrion inner membrane. Its function is as follows. Subunit gamma, of the mitochondrial membrane ATP synthase complex (F(1)F(0) ATP synthase or Complex V) that produces ATP from ADP in the presence of a proton gradient across the membrane which is generated by electron transport complexes of the respiratory chain. ATP synthase complex consist of a soluble F(1) head domain - the catalytic core - and a membrane F(1) domain - the membrane proton channel. These two domains are linked by a central stalk rotating inside the F(1) region and a stationary peripheral stalk. During catalysis, ATP synthesis in the catalytic domain of F(1) is coupled via a rotary mechanism of the central stalk subunits to proton translocation. In vivo, can only synthesize ATP although its ATP hydrolase activity can be activated artificially in vitro. With the central stalk subunit delta, is essential for the biogenesis of F(1) catalytic part of the ATP synthase complex namely in the formation of F1 assembly intermediate. The sequence is that of ATP synthase F(1) complex subunit gamma, mitochondrial from Pongo abelii (Sumatran orangutan).